The following is a 118-amino-acid chain: Large ribosomal subunit protein uL18 (118 aa).

Belongs to the universal ribosomal protein uL18 family. In terms of assembly, part of the 50S ribosomal subunit; part of the 5S rRNA/L5/L18/L25 subcomplex. Contacts the 5S and 23S rRNAs.

Functionally, this is one of the proteins that bind and probably mediate the attachment of the 5S RNA into the large ribosomal subunit, where it forms part of the central protuberance. In Mycoplasmopsis pulmonis (strain UAB CTIP) (Mycoplasma pulmonis), this protein is Large ribosomal subunit protein uL18.